A 459-amino-acid chain; its full sequence is Alcohol acyl transferase 1 allele RGc (459 aa).

Residues histidine 164 and asparagine 385 each act as proton acceptor in the active site.

Belongs to the plant acyltransferase family. Expressed at very low levels in the skin of ripe fruit.

Functionally, involved in the biosynthesis of volatile esters which confer ripe apple fruit flavor. Alcohol acyl transferase that can use a wide range of alcohols as substrate to produce esters. The protein is Alcohol acyl transferase 1 allele RGc of Malus domestica (Apple).